The primary structure comprises 231 residues: Biosynthetic peptidoglycan transglycosylase (231 aa).

The chain crosses the membrane as a helical span at residues 10–30; it reads LLLLGLIGLFLVWQLWLLGWV.

Belongs to the glycosyltransferase 51 family.

It localises to the cell inner membrane. It carries out the reaction [GlcNAc-(1-&gt;4)-Mur2Ac(oyl-L-Ala-gamma-D-Glu-L-Lys-D-Ala-D-Ala)](n)-di-trans,octa-cis-undecaprenyl diphosphate + beta-D-GlcNAc-(1-&gt;4)-Mur2Ac(oyl-L-Ala-gamma-D-Glu-L-Lys-D-Ala-D-Ala)-di-trans,octa-cis-undecaprenyl diphosphate = [GlcNAc-(1-&gt;4)-Mur2Ac(oyl-L-Ala-gamma-D-Glu-L-Lys-D-Ala-D-Ala)](n+1)-di-trans,octa-cis-undecaprenyl diphosphate + di-trans,octa-cis-undecaprenyl diphosphate + H(+). It functions in the pathway cell wall biogenesis; peptidoglycan biosynthesis. Functionally, peptidoglycan polymerase that catalyzes glycan chain elongation from lipid-linked precursors. The chain is Biosynthetic peptidoglycan transglycosylase from Dechloromonas aromatica (strain RCB).